The primary structure comprises 237 residues: Ribosomal RNA small subunit methyltransferase G (237 aa).

Residues Gly-78, Phe-83, 129-130, and Arg-148 contribute to the S-adenosyl-L-methionine site; that span reads AE.

This sequence belongs to the methyltransferase superfamily. RNA methyltransferase RsmG family.

The protein resides in the cytoplasm. Functionally, specifically methylates the N7 position of a guanine in 16S rRNA. The protein is Ribosomal RNA small subunit methyltransferase G of Streptococcus thermophilus (strain CNRZ 1066).